Here is a 62-residue protein sequence, read N- to C-terminus: UPF0434 protein Smed_3047 (62 aa).

Belongs to the UPF0434 family.

The sequence is that of UPF0434 protein Smed_3047 from Sinorhizobium medicae (strain WSM419) (Ensifer medicae).